Reading from the N-terminus, the 545-residue chain is Glucose-6-phosphate isomerase (545 aa).

The active-site Proton donor is the Glu-351. Active-site residues include His-382 and Lys-510.

Belongs to the GPI family.

Its subcellular location is the cytoplasm. The catalysed reaction is alpha-D-glucose 6-phosphate = beta-D-fructose 6-phosphate. It functions in the pathway carbohydrate biosynthesis; gluconeogenesis. It participates in carbohydrate degradation; glycolysis; D-glyceraldehyde 3-phosphate and glycerone phosphate from D-glucose: step 2/4. Its function is as follows. Catalyzes the reversible isomerization of glucose-6-phosphate to fructose-6-phosphate. The chain is Glucose-6-phosphate isomerase from Helicobacter pylori (strain J99 / ATCC 700824) (Campylobacter pylori J99).